The following is an 870-amino-acid chain: Disks large homolog 2 (870 aa).

2 S-palmitoyl cysteine lipidation sites follow: Cys5 and Cys7. Residue Ser28 is modified to Phosphoserine. Tyr58 is modified (phosphotyrosine). Ser65 is modified (phosphoserine). PDZ domains follow at residues Glu98–Arg184 and Glu193–Pro279. Phosphoserine occurs at positions 307, 328, 360, 365, 406, and 414. One can recognise a PDZ 3 domain in the interval Lys421–Gln501. At Tyr505 the chain carries Phosphotyrosine. Ser528, Ser530, Ser553, Ser627, and Ser635 each carry phosphoserine. The 71-residue stretch at Lys536–Glu606 folds into the SH3 domain. The Guanylate kinase-like domain occupies Thr680 to Glu855. A phosphotyrosine mark is found at Tyr750 and Tyr755.

The protein belongs to the MAGUK family. In terms of assembly, interacts through its PDZ domains with NETO1. Interacts with NOS1/nNOS through second PDZ domain. Interacts with KCNJ2/Kir2.1 (via C-terminus) through one of its PDZ domains. Interacts with KCNJ4, Interacts with FRMPD4 (via C-terminus). Interacts with LRFN1, LRFN2 and LRFN4. Interacts with FASLG. Interacts with KCNJ4. Interacts with ADAM22. Interacts with DGKI (via PDZ-binding motif). Palmitoylation of isoform 1 is not required for targeting to postsynaptic density.

It localises to the cell membrane. The protein localises to the postsynaptic density. The protein resides in the synapse. Its subcellular location is the membrane. It is found in the cell projection. It localises to the axon. The protein localises to the perikaryon. Required for perception of chronic pain through NMDA receptor signaling. Regulates surface expression of NMDA receptors in dorsal horn neurons of the spinal cord. Interacts with the cytoplasmic tail of NMDA receptor subunits as well as inward rectifying potassium channels. Involved in regulation of synaptic stability at cholinergic synapses. Part of the postsynaptic protein scaffold of excitatory synapses. In Homo sapiens (Human), this protein is Disks large homolog 2 (DLG2).